The chain runs to 416 residues: Lipid II:glycine glycyltransferase (416 aa).

Belongs to the FemABX family.

It localises to the cytoplasm. It carries out the reaction beta-D-GlcNAc-(1-&gt;4)-Mur2Ac(oyl-L-Ala-D-isoglutaminyl-L-Lys-D-Ala-D-Ala)-di-trans,octa-cis-undecaprenyl diphosphate + glycyl-tRNA(Gly) = beta-D-GlcNAc-(1-&gt;4)-Mur2Ac(oyl-L-Ala-D-isoglutaminyl-L-Lys-(N(6)-Gly)-D-Ala-D-Ala)-di-trans,octa-cis-undecaprenyl diphosphate + tRNA(Gly) + H(+). In terms of biological role, catalyzes the incorporation of amino acid(s) into the interchain peptide bridge of peptidoglycan, using aminoacyl-tRNA as amino acid donor. This Staphylococcus epidermidis (strain ATCC 35984 / DSM 28319 / BCRC 17069 / CCUG 31568 / BM 3577 / RP62A) protein is Lipid II:glycine glycyltransferase (femX).